The primary structure comprises 290 residues: Eukaryotic translation initiation factor 3 subunit G (290 aa).

Disordered regions lie at residues 1–35 and 157–200; these read MSRL…DGTK and ESTG…GERM. The region spanning 210 to 288 is the RRM domain; it reads ATLRVTNVSE…LILRVEFAKR (79 aa).

It belongs to the eIF-3 subunit G family. Component of the eukaryotic translation initiation factor 3 (eIF-3) complex.

The protein resides in the cytoplasm. In terms of biological role, RNA-binding component of the eukaryotic translation initiation factor 3 (eIF-3) complex, which is involved in protein synthesis of a specialized repertoire of mRNAs and, together with other initiation factors, stimulates binding of mRNA and methionyl-tRNAi to the 40S ribosome. The eIF-3 complex specifically targets and initiates translation of a subset of mRNAs involved in cell proliferation. This subunit can bind 18S rRNA. This chain is Eukaryotic translation initiation factor 3 subunit G (tif35), found in Aspergillus clavatus (strain ATCC 1007 / CBS 513.65 / DSM 816 / NCTC 3887 / NRRL 1 / QM 1276 / 107).